A 318-amino-acid polypeptide reads, in one-letter code: Small ribosomal subunit biogenesis GTPase RsgA (318 aa).

A compositionally biased stretch (basic residues) spans 1 to 16 (MTRGKPGRAGHDRRHA). The segment at 1–21 (MTRGKPGRAGHDRRHASTGEH) is disordered. The CP-type G domain maps to 84-249 (SDQFKSKQLA…LIDSPGFQEF (166 aa)). GTP is bound by residues 133 to 136 (NKID) and 187 to 195 (GQSGMGKSS). Residues Cys-273, Cys-278, His-280, and Cys-286 each contribute to the Zn(2+) site.

Belongs to the TRAFAC class YlqF/YawG GTPase family. RsgA subfamily. In terms of assembly, monomer. Associates with 30S ribosomal subunit, binds 16S rRNA. The cofactor is Zn(2+).

It is found in the cytoplasm. In terms of biological role, one of several proteins that assist in the late maturation steps of the functional core of the 30S ribosomal subunit. Helps release RbfA from mature subunits. May play a role in the assembly of ribosomal proteins into the subunit. Circularly permuted GTPase that catalyzes slow GTP hydrolysis, GTPase activity is stimulated by the 30S ribosomal subunit. The polypeptide is Small ribosomal subunit biogenesis GTPase RsgA (Ralstonia nicotianae (strain ATCC BAA-1114 / GMI1000) (Ralstonia solanacearum)).